A 209-amino-acid chain; its full sequence is UPF0502 protein PSHAa0076 (209 aa).

Belongs to the UPF0502 family.

This chain is UPF0502 protein PSHAa0076, found in Pseudoalteromonas translucida (strain TAC 125).